Here is a 152-residue protein sequence, read N- to C-terminus: uncharacterized protein (152 aa).

This is an uncharacterized protein from Methanocaldococcus jannaschii (strain ATCC 43067 / DSM 2661 / JAL-1 / JCM 10045 / NBRC 100440) (Methanococcus jannaschii).